A 361-amino-acid polypeptide reads, in one-letter code: Outer membrane protein P2 (361 aa).

A signal peptide spans 1-20 (MKKTLAALIVGAFAASAANA).

It belongs to the Gram-negative porin family. In terms of assembly, homotrimer.

It localises to the cell outer membrane. Its function is as follows. Forms pores that allow passive diffusion of small molecules across the outer membrane. This Haemophilus influenzae protein is Outer membrane protein P2 (ompP2).